A 443-amino-acid chain; its full sequence is Pentatricopeptide repeat-containing protein 6, mitochondrial (443 aa).

The N-terminal 13 residues, 1–13, are a transit peptide targeting the mitochondrion; the sequence is MRILGSLPNNIRK. PPR repeat units lie at residues 130–164 and 220–254; these read NIVD…RIRP and NSTT…NENS.

The protein localises to the mitochondrion. Mitochondrial RNA-binding protein required for the stability of the atp9 mRNA. This Schizosaccharomyces pombe (strain 972 / ATCC 24843) (Fission yeast) protein is Pentatricopeptide repeat-containing protein 6, mitochondrial (ppr6).